The primary structure comprises 241 residues: Glucosamine-6-phosphate deaminase (241 aa).

Residue aspartate 67 is the Proton acceptor; for enolization step of the active site. Asparagine 136 acts as the For ring-opening step in catalysis. The Proton acceptor; for ring-opening step role is filled by histidine 138. Glutamate 143 functions as the For ring-opening step in the catalytic mechanism.

This sequence belongs to the glucosamine/galactosamine-6-phosphate isomerase family. NagB subfamily.

It carries out the reaction alpha-D-glucosamine 6-phosphate + H2O = beta-D-fructose 6-phosphate + NH4(+). Its pathway is amino-sugar metabolism; N-acetylneuraminate degradation; D-fructose 6-phosphate from N-acetylneuraminate: step 5/5. Functionally, catalyzes the reversible isomerization-deamination of glucosamine 6-phosphate (GlcN6P) to form fructose 6-phosphate (Fru6P) and ammonium ion. The chain is Glucosamine-6-phosphate deaminase from Clostridium tetani (strain Massachusetts / E88).